The primary structure comprises 422 residues: Serine protease HTRA2, mitochondrial (422 aa).

Residues 1–17 (MALRGSHRLQVILKRCI) constitute a mitochondrion transit peptide. The propeptide occupies 18–74 (ASPLFHSHAPNRRSSQPAIKGGEPNSNGNSGHDQQNGERKGKGWRRLVSFFVPFSLG). Positions 24–56 (SHAPNRRSSQPAIKGGEPNSNGNSGHDQQNGER) are disordered. Over residues 41 to 51 (PNSNGNSGHDQ) the composition is skewed to polar residues. The chain crosses the membrane as a helical span at residues 64 to 82 (LVSFFVPFSLGAVVSAAVI). Short sequence motifs (IAP-binding) lie at residues 75-78 (AVVS) and 94-97 (SKMT). The serine protease stretch occupies residues 139-302 (SNGSGFIIEQ…IPIDYVKVFL (164 aa)). Active-site charge relay system residues include H157, D189, and S266. A PDZ domain is found at 325–410 (MGITMLTLTP…NLDIVILRGV (86 aa)).

It belongs to the peptidase S1C family. In terms of assembly, interacts with th/DIAP1 (via BIR 2 domain).

It localises to the mitochondrion intermembrane space. Its subcellular location is the mitochondrion membrane. It carries out the reaction Cleavage of non-polar aliphatic amino-acids at the P1 position, with a preference for Val, Ile and Met. At the P2 and P3 positions, Arg is selected most strongly with a secondary preference for other hydrophilic residues.. Functionally, serine protease that shows proteolytic activity against a non-specific substrate beta-casein. Promotes or induces cell death either by direct binding to and inhibition of BIRC proteins (also called inhibitor of apoptosis proteins, IAPs), leading to an increase in caspase activity, or by a BIRC inhibition-independent, caspase-independent and serine protease activity-dependent mechanism. Can antagonize antiapoptotic activity of th/Diap1 by directly inducing the degradation of th/Diap1. The polypeptide is Serine protease HTRA2, mitochondrial (Drosophila erecta (Fruit fly)).